The primary structure comprises 167 residues: HVA22-like protein b (167 aa).

The next 3 helical transmembrane spans lie at 18–38 (VIAGPVISLVYPLYASVRAIE), 47–67 (QWLTYWALYSLIKLFELTFFR), and 68–88 (LLEWIPLYPYAKLALTSWLVL).

The protein belongs to the DP1 family. As to expression, predominantly expressed in flower buds.

It is found in the membrane. This Arabidopsis thaliana (Mouse-ear cress) protein is HVA22-like protein b (HVA22B).